We begin with the raw amino-acid sequence, 81 residues long: Antitoxin MT2731 (81 aa).

Antitoxin component of a type II toxin-antitoxin (TA) system. Neutralizes the effect of cognate toxin MT2730. The protein is Antitoxin MT2731 of Mycobacterium tuberculosis (strain CDC 1551 / Oshkosh).